The primary structure comprises 31 residues: U13-ctenitoxin-Pn1b (31 aa).

3 cysteine pairs are disulfide-bonded: Cys-3/Cys-17, Cys-10/Cys-21, and Cys-16/Cys-30.

As to expression, expressed by the venom gland.

The protein localises to the secreted. Its function is as follows. Acts as a neurotoxin. The sequence is that of U13-ctenitoxin-Pn1b from Phoneutria nigriventer (Brazilian armed spider).